Here is a 461-residue protein sequence, read N- to C-terminus: Photosystem II CP43 reaction center protein (461 aa).

A propeptide spanning residues 1 to 2 (ME) is cleaved from the precursor. T3 is subject to N-acetylthreonine. At T3 the chain carries Phosphothreonine. The next 5 membrane-spanning stretches (helical) occupy residues 57-81 (LFEV…PHLA), 122-143 (LLGP…KDRN), 166-188 (KALY…RKIT), 243-263 (KPFA…LSYS), and 279-300 (WFNN…ASQA). E355 lines the [CaMn4O5] cluster pocket. A helical transmembrane segment spans residues 435 to 459 (RARAAAAGFEKGIDRDLEPVLFMTP).

The protein belongs to the PsbB/PsbC family. PsbC subfamily. As to quaternary structure, PSII is composed of 1 copy each of membrane proteins PsbA, PsbB, PsbC, PsbD, PsbE, PsbF, PsbH, PsbI, PsbJ, PsbK, PsbL, PsbM, PsbT, PsbX, PsbY, PsbZ, Psb30/Ycf12, at least 3 peripheral proteins of the oxygen-evolving complex and a large number of cofactors. It forms dimeric complexes. It depends on Binds multiple chlorophylls and provides some of the ligands for the Ca-4Mn-5O cluster of the oxygen-evolving complex. It may also provide a ligand for a Cl- that is required for oxygen evolution. PSII binds additional chlorophylls, carotenoids and specific lipids. as a cofactor.

The protein localises to the plastid. It is found in the chloroplast thylakoid membrane. Its function is as follows. One of the components of the core complex of photosystem II (PSII). It binds chlorophyll and helps catalyze the primary light-induced photochemical processes of PSII. PSII is a light-driven water:plastoquinone oxidoreductase, using light energy to abstract electrons from H(2)O, generating O(2) and a proton gradient subsequently used for ATP formation. The protein is Photosystem II CP43 reaction center protein of Nandina domestica (Heavenly bamboo).